The primary structure comprises 493 residues: MVLLWALFLALLAGAHAELPGCKIRVTSAALDLVKQEGLRFLEQELETITIPDVYGAKGHFYYNISDVRVTQLHLISSELHFQPDQDLLLNISNASLGLHFRRQLLYWFLYDGGYINASAEGVSIRTGLQLSQDSSGRIKVSNVSCEASVSKMNMAFGGTFRRMYNFFSTFITSGMRFLLNQQICPVLYHAGTVLLNSLLDTVPVRSSVDDLVGIDYSLLKDPVVSNGNLDMEFRGAFFPLKEDNWSLPNRAVEPQLEDDERMVYVAFSEFFFDSAMESYFQAGALQLTLVGDKVPSDLDMLLRATYFGSIVLLSPTVINSPLKLKLEATSPPRCTIKPSGTTISITASVTITLAPPMLPEVELSKMIMEGRLSAKLTLRGKALRVKLDLRRFQIYSNQSALESLALIPLQAPLKTLLQIGVMPLLNERTWRGVQIPLPEGINFVREVVTNHAGFVTVGADLHFAKGLREVIDKNRPADVAASHVPPPSAAAA.

The signal sequence occupies residues 1–17; that stretch reads MVLLWALFLALLAGAHA. Residues Asn-64, Asn-91, Asn-94, Asn-117, and Asn-143 are each glycosylated (N-linked (GlcNAc...) asparagine). Residues Cys-146 and Cys-185 are joined by a disulfide bond. N-linked (GlcNAc...) asparagine glycans are attached at residues Asn-245 and Asn-398.

The protein belongs to the BPI/LBP/Plunc superfamily. BPI/LBP family. Glycosylation is necessary for secretion and its phospholipid transfer activity. Highest level expression in the lung, brain and heart with relatively low levels in the liver, skeletal muscle and testis and very low levels found in the spleen and kidney.

It is found in the secreted. The protein localises to the nucleus. The enzyme catalyses a 1,2-diacyl-sn-glycero-3-phosphocholine(in) = a 1,2-diacyl-sn-glycero-3-phosphocholine(out). It carries out the reaction a 1,2-diacyl-sn-glycero-3-phosphoethanolamine(in) = a 1,2-diacyl-sn-glycero-3-phosphoethanolamine(out). The catalysed reaction is a 1,2-diacyl-sn-glycerol(in) = a 1,2-diacyl-sn-glycerol(out). It catalyses the reaction a 1,2-diacyl-sn-glycero-3-phosphate(in) = a 1,2-diacyl-sn-glycero-3-phosphate(out). The enzyme catalyses a sphingomyelin(in) = a sphingomyelin(out). It carries out the reaction a 1,2-diacyl-sn-glycero-3-phospho-(1'-sn-glycerol)(in) = a 1,2-diacyl-sn-glycero-3-phospho-(1'-sn-glycerol)(out). The catalysed reaction is a 1,2-diacyl-sn-glycero-3-phospho-(1D-myo-inositol)(in) = a 1,2-diacyl-sn-glycero-3-phospho-(1D-myo-inositol)(out). It catalyses the reaction 1-hexadecanoyl-2-(5Z,8Z,11Z,14Z-eicosatetraenoyl)-sn-glycero-3-phosphoethanolamine(in) = 1-hexadecanoyl-2-(5Z,8Z,11Z,14Z-eicosatetraenoyl)-sn-glycero-3-phosphoethanolamine(out). The enzyme catalyses N-(hexadecanoyl)-sphing-4-enine-1-phosphocholine(in) = N-(hexadecanoyl)-sphing-4-enine-1-phosphocholine(out). It carries out the reaction 1,2-dihexadecanoyl-sn-glycero-3-phosphocholine(in) = 1,2-dihexadecanoyl-sn-glycero-3-phosphocholine(out). In terms of biological role, mediates the transfer of phospholipids and free cholesterol from triglyceride-rich lipoproteins (low density lipoproteins or LDL and very low density lipoproteins or VLDL) into high-density lipoproteins (HDL) as well as the exchange of phospholipids between triglyceride-rich lipoproteins themselves. Facilitates the transfer of a spectrum of different lipid molecules, including sphingomyelin, phosphatidylcholine, phosphatidylinositol, phosphatidylglycerol, and phosphatidyl ethanolamine. Plays an important role in HDL remodeling which involves modulating the size and composition of HDL. Also plays a key role in the uptake of cholesterol from peripheral cells and tissues that is subsequently transported to the liver for degradation and excretion. Two distinct forms of PLTP exist in plasma: an active form that can transfer phosphatidylcholine from phospholipid vesicles to HDL, and an inactive form that lacks this capability. In Mus musculus (Mouse), this protein is Phospholipid transfer protein (Pltp).